Reading from the N-terminus, the 515-residue chain is Glucose-6-phosphate 1-dehydrogenase (515 aa).

N-acetylalanine is present on A2. At S8 the chain carries Phosphoserine. Position 10 is a phosphothreonine (T10). NADP(+) is bound by residues 38-45 (GASGDLAK) and R72. The residue at position 89 (K89) is an N6-acetyllysine. Positions 147 and 171 each coordinate NADP(+). Residues K171, 201-205 (HYLGK), E239, and D258 each bind D-glucose 6-phosphate. An N6-(2-hydroxyisobutyryl)lysine; alternate modification is found at K171. K171 carries the post-translational modification N6-acetyllysine; alternate. The active-site Proton acceptor is H263. Residue R357 coordinates NADP(+). Residues K360 and R365 each contribute to the D-glucose 6-phosphate site. K366, R370, and R393 together coordinate NADP(+). Q395 is a binding site for D-glucose 6-phosphate. NADP(+)-binding positions include 401–403 (YTK) and 421–423 (DLT). K403 carries the N6-acetyllysine modification. An N6-acetyllysine modification is found at K432. R487 serves as a coordination point for NADP(+). K497 carries the N6-acetyllysine modification. Residues Y503 and W509 each coordinate NADP(+). At Y503 the chain carries Phosphotyrosine.

Belongs to the glucose-6-phosphate dehydrogenase family. In terms of assembly, homotetramer; dimer of dimers. Interacts with SIRT2; the interaction is enhanced by H(2)O(2) treatment. Forms a ternary complex with ALDOB and TP53; this interaction is direct. ALDOB stabilizes the complex inhibiting G6PD activity and keeping oxidative pentose phosphate metabolism in check. Post-translationally, acetylated by ELP3 at Lys-403; acetylation inhibits its homodimerization and enzyme activity. Deacetylated by SIRT2 at Lys-403; deacetylation stimulates its enzyme activity.

It localises to the cytoplasm. The protein resides in the cytosol. It is found in the membrane. It catalyses the reaction D-glucose 6-phosphate + NADP(+) = 6-phospho-D-glucono-1,5-lactone + NADPH + H(+). It participates in carbohydrate degradation; pentose phosphate pathway; D-ribulose 5-phosphate from D-glucose 6-phosphate (oxidative stage): step 1/3. In terms of biological role, cytosolic glucose-6-phosphate dehydrogenase that catalyzes the first and rate-limiting step of the oxidative branch within the pentose phosphate pathway/shunt, an alternative route to glycolysis for the dissimilation of carbohydrates and a major source of reducing power and metabolic intermediates for fatty acid and nucleic acid biosynthetic processes. This Rattus norvegicus (Rat) protein is Glucose-6-phosphate 1-dehydrogenase (G6pdx).